A 719-amino-acid polypeptide reads, in one-letter code: Protein Hook homolog 3 (719 aa).

The Calponin-homology (CH) domain occupies 7-123; that stretch reads VDLCESLLTW…RMLQLILGCA (117 aa). Coiled-coil stretches lie at residues 162 to 431 and 459 to 665; these read SIGT…QAQE and EIKE…IVSA. The disordered stretch occupies residues 679–719; it reads EDRLASTGSGQSFLARQRQATSSRRSYPGHVQPATASDVIA. The segment covering 693–704 has biased composition (low complexity); the sequence is ARQRQATSSRRS.

The protein belongs to the hook family. In terms of assembly, interacts with microtubules.

It localises to the cytoplasm. The protein resides in the cytoskeleton. Its subcellular location is the golgi apparatus. Acts as an adapter protein linking the dynein motor complex to various cargos and converts dynein from a non-processive to a highly processive motor in the presence of dynactin. Facilitates the interaction between dynein and dynactin and activates dynein processivity (the ability to move along a microtubule for a long distance without falling off the track). Predominantly recruits 2 dyneins, which increases both the force and speed of the microtubule motor. Component of the FTS/Hook/FHIP complex (FHF complex). The FHF complex may function to promote vesicle trafficking and/or fusion via the homotypic vesicular protein sorting complex (the HOPS complex). May regulate clearance of endocytosed receptors such as MSR1. Participates in defining the architecture and localization of the Golgi complex. FHF complex promotes the distribution of AP-4 complex to the perinuclear area of the cell. The protein is Protein Hook homolog 3 (hook3) of Xenopus laevis (African clawed frog).